The following is a 210-amino-acid chain: Large ribosomal subunit protein uL4 (210 aa).

Polar residues predominate over residues 41-52; the sequence is MNNARQGTASSK. Residues 41–80 form a disordered region; the sequence is MNNARQGTASSKTRSEVRGGGRKPWRQKGTGRARAGSSRS. The segment covering 60 to 71 has biased composition (basic residues); it reads GGRKPWRQKGTG.

The protein belongs to the universal ribosomal protein uL4 family. As to quaternary structure, part of the 50S ribosomal subunit.

Its function is as follows. One of the primary rRNA binding proteins, this protein initially binds near the 5'-end of the 23S rRNA. It is important during the early stages of 50S assembly. It makes multiple contacts with different domains of the 23S rRNA in the assembled 50S subunit and ribosome. Functionally, forms part of the polypeptide exit tunnel. In Acaryochloris marina (strain MBIC 11017), this protein is Large ribosomal subunit protein uL4.